Consider the following 690-residue polypeptide: Glutamate--cysteine ligase (690 aa).

Composition is skewed to low complexity over residues 574-585 (QQQNGHVNNNNN) and 598-619 (NGSTTTTNGTNSGSGITETNGT). Residues 574-620 (QQQNGHVNNNNNNDKKTKNDPIIVNGSTTTTNGTNSGSGITETNGTM) form a disordered region.

Belongs to the glutamate--cysteine ligase type 3 family.

The catalysed reaction is L-cysteine + L-glutamate + ATP = gamma-L-glutamyl-L-cysteine + ADP + phosphate + H(+). It functions in the pathway sulfur metabolism; glutathione biosynthesis; glutathione from L-cysteine and L-glutamate: step 1/2. The polypeptide is Glutamate--cysteine ligase (GCS1) (Candida albicans (Yeast)).